The following is a 157-amino-acid chain: S-ribosylhomocysteine lyase (157 aa).

Fe cation-binding residues include His54, His58, and Cys124.

The protein belongs to the LuxS family. In terms of assembly, homodimer. Requires Fe cation as cofactor.

The catalysed reaction is S-(5-deoxy-D-ribos-5-yl)-L-homocysteine = (S)-4,5-dihydroxypentane-2,3-dione + L-homocysteine. Functionally, involved in the synthesis of autoinducer 2 (AI-2) which is secreted by bacteria and is used to communicate both the cell density and the metabolic potential of the environment. The regulation of gene expression in response to changes in cell density is called quorum sensing. Catalyzes the transformation of S-ribosylhomocysteine (RHC) to homocysteine (HC) and 4,5-dihydroxy-2,3-pentadione (DPD). The polypeptide is S-ribosylhomocysteine lyase (Levilactobacillus brevis (strain ATCC 367 / BCRC 12310 / CIP 105137 / JCM 1170 / LMG 11437 / NCIMB 947 / NCTC 947) (Lactobacillus brevis)).